Here is a 532-residue protein sequence, read N- to C-terminus: MAGLFKDIWHAMTSYDRHAGIDSPYRTGRHVPLNRNSGLAGVTTASDSRADINSPYLQGDGRGSTMSFDTAYGGRAISPMPSPANGGPYSPGLVSQRQSVHQDAFDVHSPTGEIPMQNFQNGGPPPPPVASSWEKIDRWAEENYPELFDQLGEGCTVNDLNELEYQLDCTLPQDLRQSLQIHDGQERGGLPTGIIFSSMLLDCEEMVQEWENWKTVNQEFMLDPVLVKRQSQAFAAQASSSKDAPNRNQNWRQELLNKQDSVPPAAIQKAYAHPAWIPLVRDWGGNNLAVDLAPGPKGHWGQIILFGRDYDTKYVVARSWAHFLAMVAEDLSSGRWFVDEDTNELKLREFKATRVEPSYFEILRWRMDQKYGRTANKRKSMAPSMASASGMRSPPTPGSPYQSPTEHNEPRGRSLHRLTGTSPMSSPIRPGYGKPSPLARVAEEAPPTTSLTASNASLEAKAADNLMELNTPRTSGEHSKEDIKVNEDSPAKERTSEDKEKKPETEANGKATESKGKQTTVEDAEDMKDIEI.

The tract at residues 374-532 is disordered; that stretch reads TANKRKSMAP…DAEDMKDIEI (159 aa). Residues 381–393 show a composition bias toward low complexity; that stretch reads MAPSMASASGMRS. Residues 447–457 are compositionally biased toward polar residues; that stretch reads PTTSLTASNAS. Positions 475–516 are enriched in basic and acidic residues; it reads SGEHSKEDIKVNEDSPAKERTSEDKEKKPETEANGKATESKG.

It belongs to the KNR4/SMI1 family.

In terms of biological role, involved in the regulation of 1,3-beta-glucan synthase activity and cell-wall formation. In Neurospora crassa (strain ATCC 24698 / 74-OR23-1A / CBS 708.71 / DSM 1257 / FGSC 987), this protein is Glucan synthesis regulatory protein (cot-2).